The chain runs to 239 residues: Norbelladine 4'-O-methyltransferase 2 (239 aa).

S-adenosyl-L-methionine contacts are provided by residues Val55, Glu77, 79 to 80 (GV), Ser85, Asp103, and Ala132. Asp155 provides a ligand contact to a divalent metal cation. S-adenosyl-L-methionine is bound at residue Asp157. A divalent metal cation-binding residues include Asp181 and Asn182.

The protein belongs to the class I-like SAM-binding methyltransferase superfamily. Cation-dependent O-methyltransferase family. Mg(2+) is required as a cofactor.

It carries out the reaction norbelladine + S-adenosyl-L-methionine = 4'-O-methylnorbelladine + S-adenosyl-L-homocysteine + H(+). The protein operates within alkaloid biosynthesis. 4'-O-methyltransferase converting norbelladine to 4'-O-methylnorbelladine. 4'-O-methylnorbelladine is a precursor to all Amaryllidaceae alkaloids such as galanthamine, lycorine and haemanthamine, and including haemanthamine- and crinamine-type alkaloids, promising anticancer agents. The sequence is that of Norbelladine 4'-O-methyltransferase 2 from Narcissus aff. pseudonarcissus MK-2014 (Daffodil).